The primary structure comprises 341 residues: Phosphoribosylformylglycinamidine cyclo-ligase (341 aa).

The protein belongs to the AIR synthase family.

The protein localises to the cytoplasm. The catalysed reaction is 2-formamido-N(1)-(5-O-phospho-beta-D-ribosyl)acetamidine + ATP = 5-amino-1-(5-phospho-beta-D-ribosyl)imidazole + ADP + phosphate + H(+). Its pathway is purine metabolism; IMP biosynthesis via de novo pathway; 5-amino-1-(5-phospho-D-ribosyl)imidazole from N(2)-formyl-N(1)-(5-phospho-D-ribosyl)glycinamide: step 2/2. In Caldicellulosiruptor saccharolyticus (strain ATCC 43494 / DSM 8903 / Tp8T 6331), this protein is Phosphoribosylformylglycinamidine cyclo-ligase.